The following is an 804-amino-acid chain: Enhancer of polycomb homolog 2 (804 aa).

Disordered regions lie at residues 372 to 395 (QSSDDDEFPQVPSPLSELEEENDP), 484 to 508 (GFSSSSHIAQPPSSPSRTNASDRHC), 603 to 624 (QSQQSLQQSHPKAQGSGSSDCM), and 646 to 669 (PVRSEVNKDQNAGHSNLNGVVQPS). 2 stretches are compositionally biased toward polar residues: residues 611–624 (SHPKAQGSGSSDCM) and 654–669 (DQNAGHSNLNGVVQPS).

The protein belongs to the enhancer of polycomb family.

The protein resides in the nucleus. In terms of biological role, may play a role in transcription or DNA repair. The protein is Enhancer of polycomb homolog 2 (epc2) of Xenopus laevis (African clawed frog).